The chain runs to 223 residues: Putative germin-like protein 2-3 (223 aa).

A signal peptide spans Met-1 to Ala-28. Residues Cys-38 and Cys-53 are joined by a disulfide bond. The Cupin type-1 domain maps to Ser-67–Asp-217. Asn-74 carries N-linked (GlcNAc...) asparagine glycosylation. Residues His-115, His-117, Glu-122, and His-163 each contribute to the Mn(2+) site.

Belongs to the germin family. In terms of assembly, oligomer (believed to be a pentamer but probably hexamer).

The protein localises to the secreted. Its subcellular location is the extracellular space. It is found in the apoplast. May play a role in plant defense. Probably has no oxalate oxidase activity even if the active site is conserved. The chain is Putative germin-like protein 2-3 from Oryza sativa subsp. japonica (Rice).